Consider the following 294-residue polypeptide: RAB7A-interacting MON1-CCZ1 complex subunit 1 (294 aa).

Ala-2 is modified (N-acetylalanine).

This sequence belongs to the RIMOC1 family. Interacts with the MON1A-CCZ1B complex. Interacts with GDP-bound RAB7A and promotes its interaction with the MON1A-CCZ1B complex.

Its subcellular location is the cytoplasm. The protein resides in the cytosol. Plays an important role in the removal of damaged mitochondria via mitophagy by controlling the stability and localization of RAB7A. Required for the recruitment of RAB7A and ATG9A vesicles to damaged mitochondria and promotes the stability of RAB7A by inhibiting its proteasomal degradation during mitophagy. This Homo sapiens (Human) protein is RAB7A-interacting MON1-CCZ1 complex subunit 1.